Reading from the N-terminus, the 164-residue chain is UPF0304 protein PM1500 (164 aa).

Belongs to the UPF0304 family.

The protein is UPF0304 protein PM1500 of Pasteurella multocida (strain Pm70).